Consider the following 497-residue polypeptide: tRNA-2-methylthio-N(6)-dimethylallyladenosine synthase (497 aa).

The interval 1 to 50 is disordered; it reads MTGTSNIPTHGKEHKDAPALLPLPAPNPHHTHAAHPGNPSHDRPPSRGKL. One can recognise an MTTase N-terminal domain in the interval 48–165; it reads GKLFIKTHGC…LPDMIRARRE (118 aa). [4Fe-4S] cluster contacts are provided by cysteine 57, cysteine 94, cysteine 128, cysteine 202, cysteine 206, and cysteine 209. In terms of domain architecture, Radical SAM core spans 188 to 430; it reads RAEGPSAFVS…QKHINTYAAD (243 aa). The 64-residue stretch at 433–496 folds into the TRAM domain; it reads KRMIGTVQTV…SNSLRGRVHT (64 aa).

This sequence belongs to the methylthiotransferase family. MiaB subfamily. In terms of assembly, monomer. [4Fe-4S] cluster is required as a cofactor.

It is found in the cytoplasm. The enzyme catalyses N(6)-dimethylallyladenosine(37) in tRNA + (sulfur carrier)-SH + AH2 + 2 S-adenosyl-L-methionine = 2-methylsulfanyl-N(6)-dimethylallyladenosine(37) in tRNA + (sulfur carrier)-H + 5'-deoxyadenosine + L-methionine + A + S-adenosyl-L-homocysteine + 2 H(+). Its function is as follows. Catalyzes the methylthiolation of N6-(dimethylallyl)adenosine (i(6)A), leading to the formation of 2-methylthio-N6-(dimethylallyl)adenosine (ms(2)i(6)A) at position 37 in tRNAs that read codons beginning with uridine. The polypeptide is tRNA-2-methylthio-N(6)-dimethylallyladenosine synthase (Xylella fastidiosa (strain 9a5c)).